A 494-amino-acid chain; its full sequence is UPF0371 protein STER_1332 (494 aa).

Belongs to the UPF0371 family.

The sequence is that of UPF0371 protein STER_1332 from Streptococcus thermophilus (strain ATCC BAA-491 / LMD-9).